A 493-amino-acid polypeptide reads, in one-letter code: Amino acid permease 2 (493 aa).

Topologically, residues 1-49 are cytoplasmic; that stretch reads MGETAAANNHRHHHHHGHQVFDVASHDFVPPQPAFKCFDDDGRLKRTGT. 2 consecutive transmembrane segments (helical) span residues 50 to 70 and 71 to 91; these read VWTA…LSLA and WAIA…FSLV. At 92–138 the chain is on the cytoplasmic side; it reads TLYSSTLLSDCYRTGDAVSGKRNYTYMDAVRSILGGFKFKICGLIQY. Residues 139–159 traverse the membrane as a helical segment; that stretch reads LNLFGIAIGYTIAASISMMAI. At 160–175 the chain is on the extracellular side; it reads KRSNCFHKSGGKDPCH. The chain crosses the membrane as a helical span at residues 176–196; the sequence is MSSNPYMIVFGVAEILLSQVP. At 197–200 the chain is on the cytoplasmic side; it reads DFDQ. Residues 201–221 form a helical membrane-spanning segment; the sequence is IWWISIVAAVMSFTYSAIGLA. Residues 222-253 lie on the Extracellular side of the membrane; the sequence is LGIVQVAANGVFKGSLTGISIGTVTQTQKIWR. A helical transmembrane segment spans residues 254 to 274; sequence TFQALGDIAFAYSYSVVLIEI. Residues 275 to 293 are Cytoplasmic-facing; the sequence is QDTVRSPPAESKTMKKATK. Residues 294-314 traverse the membrane as a helical segment; sequence ISIAVTTIFYMLCGSMGYAAF. The Extracellular portion of the chain corresponds to 315–340; that stretch reads GDAAPGNLLTGFGFYNPFWLLDIANA. The chain crosses the membrane as a helical span at residues 341–361; that stretch reads AIVVHLVGAYQVFAQPIFAFI. At 362–396 the chain is on the cytoplasmic side; sequence EKSVAERYPDNDFLSKEFEIRIPGFKSPYKVNVFR. The helical transmembrane segment at 397 to 417 threads the bilayer; sequence MVYRSGFVVTTTVISMLMPFF. The Extracellular portion of the chain corresponds to 418–419; that stretch reads ND. The helical transmembrane segment at 420-440 threads the bilayer; sequence VVGILGALGFWPLTVYFPVEM. Topologically, residues 441–458 are cytoplasmic; the sequence is YIKQRKVEKWSTRWVCLQ. A helical transmembrane segment spans residues 459–479; it reads MLSVACLVISVVAGVGSIAGV. The Extracellular portion of the chain corresponds to 480–493; sequence MLDLKVYKPFKSTY.

Belongs to the amino acid/polyamine transporter 2 family. Amino acid/auxin permease (AAAP) (TC 2.A.18.2) subfamily. As to expression, highly expressed in developing pods. Found in the vascular strands of siliques, cotyledons, leaves and roots, in the inner phloem of stems, and in the funiculi. Lower levels of expression in flowers. Not expressed in seeds.

It is found in the cell membrane. Its activity is regulated as follows. Inhibited by diethylpyrocarbonate (DEPC). Functionally, amino acid-proton symporter. Stereospecific transporter with a broad specificity for histidine, arginine, glutamate and neutral amino acids, favoring small amino acids such as alanine, asparagine and glutamine. Also accepts large aromatic residues such as phenlalanine or tyrosine. Has a much higher affinity for basic amino acids as compared with AAP1. May function in xylem-to-phloem transfer and in uptake of amino acids assimilated in the green silique tissue. The polypeptide is Amino acid permease 2 (AAP2) (Arabidopsis thaliana (Mouse-ear cress)).